Reading from the N-terminus, the 445-residue chain is Tubulin beta-4 chain (445 aa).

Positions 1 to 4 (MREI) match the MREI motif motif. Residues glutamine 11, glutamate 69, serine 138, glycine 142, threonine 143, glycine 144, asparagine 204, and asparagine 226 each contribute to the GTP site. Position 69 (glutamate 69) interacts with Mg(2+). The segment at 425–445 (YQDATAEEEGEFEEGEEEENA) is disordered. The span at 429-445 (TAEEEGEFEEGEEEENA) shows a compositional bias: acidic residues. Glutamate 438 bears the 5-glutamyl polyglutamate mark.

This sequence belongs to the tubulin family. In terms of assembly, dimer of alpha and beta chains. A typical microtubule is a hollow water-filled tube with an outer diameter of 25 nm and an inner diameter of 15 nM. Alpha-beta heterodimers associate head-to-tail to form protofilaments running lengthwise along the microtubule wall with the beta-tubulin subunit facing the microtubule plus end conferring a structural polarity. Microtubules usually have 13 protofilaments but different protofilament numbers can be found in some organisms and specialized cells. It depends on Mg(2+) as a cofactor. In terms of processing, some glutamate residues at the C-terminus are polyglycylated, resulting in polyglycine chains on the gamma-carboxyl group. Glycylation is mainly limited to tubulin incorporated into axonemes (cilia and flagella) whereas glutamylation is prevalent in neuronal cells, centrioles, axonemes, and the mitotic spindle. Both modifications can coexist on the same protein on adjacent residues, and lowering polyglycylation levels increases polyglutamylation, and reciprocally. The precise function of polyglycylation is still unclear. Post-translationally, some glutamate residues at the C-terminus are polyglutamylated, resulting in polyglutamate chains on the gamma-carboxyl group. Polyglutamylation plays a key role in microtubule severing by spastin (SPAST). SPAST preferentially recognizes and acts on microtubules decorated with short polyglutamate tails: severing activity by SPAST increases as the number of glutamates per tubulin rises from one to eight, but decreases beyond this glutamylation threshold. In terms of tissue distribution, preferential expression in germ cells.

Its subcellular location is the cytoplasm. It localises to the cytoskeleton. In terms of biological role, tubulin is the major constituent of microtubules, a cylinder consisting of laterally associated linear protofilaments composed of alpha- and beta-tubulin heterodimers. Microtubules grow by the addition of GTP-tubulin dimers to the microtubule end, where a stabilizing cap forms. Below the cap, tubulin dimers are in GDP-bound state, owing to GTPase activity of alpha-tubulin. The polypeptide is Tubulin beta-4 chain (tubb4) (Xenopus laevis (African clawed frog)).